A 79-amino-acid polypeptide reads, in one-letter code: Acyl carrier protein (79 aa).

In terms of domain architecture, Carrier spans 2-77 (SEIADKVKKI…DAIDYIEKQK (76 aa)). Ser-37 carries the O-(pantetheine 4'-phosphoryl)serine modification.

It belongs to the acyl carrier protein (ACP) family. In terms of processing, 4'-phosphopantetheine is transferred from CoA to a specific serine of apo-ACP by AcpS. This modification is essential for activity because fatty acids are bound in thioester linkage to the sulfhydryl of the prosthetic group.

It localises to the cytoplasm. It functions in the pathway lipid metabolism; fatty acid biosynthesis. In terms of biological role, carrier of the growing fatty acid chain in fatty acid biosynthesis. This chain is Acyl carrier protein, found in Gluconacetobacter diazotrophicus (strain ATCC 49037 / DSM 5601 / CCUG 37298 / CIP 103539 / LMG 7603 / PAl5).